A 130-amino-acid chain; its full sequence is Protein ApaG (130 aa).

An ApaG domain is found at 3-127 (KAETRGITVT…FSLDSPHLRR (125 aa)).

In Methylorubrum populi (strain ATCC BAA-705 / NCIMB 13946 / BJ001) (Methylobacterium populi), this protein is Protein ApaG.